The sequence spans 324 residues: Beta-ketoacyl-[acyl-carrier-protein] synthase III (324 aa).

Active-site residues include C114 and H246. The ACP-binding stretch occupies residues 247–251 (QANLR). N276 is an active-site residue.

The protein belongs to the thiolase-like superfamily. FabH family. As to quaternary structure, homodimer.

It is found in the cytoplasm. It carries out the reaction malonyl-[ACP] + acetyl-CoA + H(+) = 3-oxobutanoyl-[ACP] + CO2 + CoA. It participates in lipid metabolism; fatty acid biosynthesis. In terms of biological role, catalyzes the condensation reaction of fatty acid synthesis by the addition to an acyl acceptor of two carbons from malonyl-ACP. Catalyzes the first condensation reaction which initiates fatty acid synthesis and may therefore play a role in governing the total rate of fatty acid production. Possesses both acetoacetyl-ACP synthase and acetyl transacylase activities. Its substrate specificity determines the biosynthesis of branched-chain and/or straight-chain of fatty acids. The polypeptide is Beta-ketoacyl-[acyl-carrier-protein] synthase III (Campylobacter jejuni subsp. jejuni serotype O:6 (strain 81116 / NCTC 11828)).